We begin with the raw amino-acid sequence, 429 residues long: Adenylosuccinate synthetase (429 aa).

Residues 12–18 (GDEGKGK) and 40–42 (GHT) contribute to the GTP site. Asp-13 (proton acceptor) is an active-site residue. Residues Asp-13 and Gly-40 each contribute to the Mg(2+) site. IMP contacts are provided by residues 13–16 (DEGK), 38–41 (NAGH), Thr-128, Arg-142, Gln-223, Thr-238, and Arg-302. His-41 serves as the catalytic Proton donor. Position 298–304 (298–304 (TTTGRPR)) interacts with substrate. GTP-binding positions include Arg-304, 330–332 (SID), and 412–414 (SVG).

It belongs to the adenylosuccinate synthetase family. As to quaternary structure, homodimer. The cofactor is Mg(2+).

The protein resides in the cytoplasm. It carries out the reaction IMP + L-aspartate + GTP = N(6)-(1,2-dicarboxyethyl)-AMP + GDP + phosphate + 2 H(+). The protein operates within purine metabolism; AMP biosynthesis via de novo pathway; AMP from IMP: step 1/2. In terms of biological role, plays an important role in the de novo pathway of purine nucleotide biosynthesis. Catalyzes the first committed step in the biosynthesis of AMP from IMP. The chain is Adenylosuccinate synthetase from Bacillus cereus (strain ZK / E33L).